We begin with the raw amino-acid sequence, 318 residues long: UAP56-interacting factor (318 aa).

At Met-1 the chain carries N-acetylmethionine. A disordered region spans residues 1-25; it reads MNRFGTRLVGATATSSPPPKARSNE. Phosphothreonine is present on Thr-14. Phosphoserine is present on residues Ser-16 and Ser-23. A UAP56-binding motif motif is present at residues 26-44; the sequence is NLDKIDMSLDDIIKLNRKE. Ser-61 is subject to Phosphoserine. Residues 79–100 form a disordered region; sequence GFGKTSLNRRGRVMPGKRRPNG. Residues 85–98 show a composition bias toward basic residues; the sequence is LNRRGRVMPGKRRP. At Ser-118 the chain carries Phosphoserine. Residue Lys-140 forms a Glycyl lysine isopeptide (Lys-Gly) (interchain with G-Cter in SUMO1) linkage. A Glycyl lysine isopeptide (Lys-Gly) (interchain with G-Cter in SUMO2) cross-link involves residue Lys-261.

Belongs to the UIF family. Interacts with CHTOP. Interacts with DDX39B/UAP56 and NXF1; interaction with DDX39B/UAP56 and NXF1 are mutually exclusive. Interacts with SSRP1; required for its recruitment to mRNAs. Expressed in a wide variety of cancer types.

The protein resides in the nucleus. Its subcellular location is the nucleoplasm. The protein localises to the nucleus speckle. Functionally, required for mRNA export from the nucleus to the cytoplasm. Acts as an adapter that uses the DDX39B/UAP56-NFX1 pathway to ensure efficient mRNA export and delivering to the nuclear pore. Associates with spliced and unspliced mRNAs simultaneously with ALYREF/THOC4. This Homo sapiens (Human) protein is UAP56-interacting factor (FYTTD1).